The following is a 938-amino-acid chain: Isoleucine--tRNA ligase (938 aa).

Residues 58 to 68 (PYANGSIHIGH) carry the 'HIGH' region motif. Lysine 183 carries the post-translational modification N6-acetyllysine. Glutamate 561 provides a ligand contact to L-isoleucyl-5'-AMP. The 'KMSKS' region motif lies at 602 to 606 (KMSKS). An ATP-binding site is contributed by lysine 605. Zn(2+) is bound by residues cysteine 901, cysteine 904, cysteine 921, and cysteine 924.

The protein belongs to the class-I aminoacyl-tRNA synthetase family. IleS type 1 subfamily. Monomer. It depends on Zn(2+) as a cofactor.

The protein localises to the cytoplasm. It carries out the reaction tRNA(Ile) + L-isoleucine + ATP = L-isoleucyl-tRNA(Ile) + AMP + diphosphate. Catalyzes the attachment of isoleucine to tRNA(Ile). As IleRS can inadvertently accommodate and process structurally similar amino acids such as valine, to avoid such errors it has two additional distinct tRNA(Ile)-dependent editing activities. One activity is designated as 'pretransfer' editing and involves the hydrolysis of activated Val-AMP. The other activity is designated 'posttransfer' editing and involves deacylation of mischarged Val-tRNA(Ile). This chain is Isoleucine--tRNA ligase, found in Escherichia coli O7:K1 (strain IAI39 / ExPEC).